The primary structure comprises 616 residues: Dihydroxy-acid dehydratase (616 aa).

Aspartate 81 contacts Mg(2+). Cysteine 122 contacts [2Fe-2S] cluster. Mg(2+) is bound by residues aspartate 123 and lysine 124. Lysine 124 bears the N6-carboxylysine mark. Residue cysteine 195 coordinates [2Fe-2S] cluster. Glutamate 491 is a binding site for Mg(2+). Serine 517 acts as the Proton acceptor in catalysis.

It belongs to the IlvD/Edd family. As to quaternary structure, homodimer. Requires [2Fe-2S] cluster as cofactor. It depends on Mg(2+) as a cofactor.

It carries out the reaction (2R)-2,3-dihydroxy-3-methylbutanoate = 3-methyl-2-oxobutanoate + H2O. The enzyme catalyses (2R,3R)-2,3-dihydroxy-3-methylpentanoate = (S)-3-methyl-2-oxopentanoate + H2O. The protein operates within amino-acid biosynthesis; L-isoleucine biosynthesis; L-isoleucine from 2-oxobutanoate: step 3/4. Its pathway is amino-acid biosynthesis; L-valine biosynthesis; L-valine from pyruvate: step 3/4. In terms of biological role, functions in the biosynthesis of branched-chain amino acids. Catalyzes the dehydration of (2R,3R)-2,3-dihydroxy-3-methylpentanoate (2,3-dihydroxy-3-methylvalerate) into 2-oxo-3-methylpentanoate (2-oxo-3-methylvalerate) and of (2R)-2,3-dihydroxy-3-methylbutanoate (2,3-dihydroxyisovalerate) into 2-oxo-3-methylbutanoate (2-oxoisovalerate), the penultimate precursor to L-isoleucine and L-valine, respectively. This Escherichia coli O17:K52:H18 (strain UMN026 / ExPEC) protein is Dihydroxy-acid dehydratase.